A 311-amino-acid chain; its full sequence is Cytosolic Fe-S cluster assembly factor Nubp1 homolog (311 aa).

The [4Fe-4S] cluster site is built by cysteine 9, cysteine 23, cysteine 26, and cysteine 32. Residue 63-70 (GKGGVGKS) coordinates ATP. Positions 240 and 243 each coordinate [4Fe-4S] cluster.

This sequence belongs to the Mrp/NBP35 ATP-binding proteins family. NUBP1/NBP35 subfamily. Heterotetramer of 2 Nubp1 and 2 Nubp2 chains. The cofactor is [4Fe-4S] cluster.

It is found in the cytoplasm. Its function is as follows. Component of the cytosolic iron-sulfur (Fe/S) protein assembly (CIA) machinery. Required for maturation of extramitochondrial Fe-S proteins. The Nubp1-Nubp2 heterotetramer forms a Fe-S scaffold complex, mediating the de novo assembly of an Fe-S cluster and its transfer to target apoproteins. The polypeptide is Cytosolic Fe-S cluster assembly factor Nubp1 homolog (Drosophila erecta (Fruit fly)).